The following is an 82-amino-acid chain: MAFTLYSLMQAALLCVNAIAVLHEERFLKNIGWGTDQGIGGFGEEPGIKSQLMNLIRSVRTVMRVPLIIVNSITIVLLLLFG.

2 helical membrane-spanning segments follow: residues 2 to 22 (AFTL…IAVL) and 62 to 82 (VMRV…LLFG).

Belongs to the YOS1 family.

The protein resides in the endoplasmic reticulum membrane. Its function is as follows. Regulator of endoplasmic reticulum secretion that acts as a key determinant of brain size. Required for secretion of extracellular matrix proteins. Required for correct brain development by depositing sufficient extracellular matrix proteins for tissue integrity and the proliferation of neural progenitors. Acts as a regulator of the unfolded protein response (UPR). In Mus musculus (Mouse), this protein is Immediate early response 3-interacting protein 1.